A 416-amino-acid chain; its full sequence is MGLKRVVVIGLGLSGKSIARFLARKGVYVLGVDSSIQALQHCPYIHEKLLETDEFPTQVDYVVRSPGISKDHPWVKAARAAQISVVTDIQLAFQTKEFIEQKSFGITGTVGKTTTILFLEYLLRKAGIPAFAMGNVGVPILDGMQNSGVRLVEMSSFQLADQETSYPVLSGGMILNISDNHLDYHGSFLEYCQSKQNLSLCMRNPEDLWVGDQRFCGRSYWEEVQKYMRLLDKESALKPLYLHDKYNYCCAYLLAQAEFPIAKSLFIEAVATFKKPSHRMEYLGEKCGVHYINDSKATTVRATEKALLSIGSRAIVILGGRNKGYSFVSLLPSLRRFAKSVVAMGECAQEIAQDLDGFPVTVVRNLHEALLCAEEQAIPGDVVLLSPACASFDQFRSYEERGAIFKQLVGMEEVLL.

108 to 114 is a binding site for ATP; sequence GTVGKTT.

The protein belongs to the MurCDEF family.

Its subcellular location is the cytoplasm. The catalysed reaction is UDP-N-acetyl-alpha-D-muramoyl-L-alanine + D-glutamate + ATP = UDP-N-acetyl-alpha-D-muramoyl-L-alanyl-D-glutamate + ADP + phosphate + H(+). Its pathway is cell wall biogenesis; peptidoglycan biosynthesis. In terms of biological role, cell wall formation. Catalyzes the addition of glutamate to the nucleotide precursor UDP-N-acetylmuramoyl-L-alanine (UMA). This chain is UDP-N-acetylmuramoylalanine--D-glutamate ligase, found in Chlamydia muridarum (strain MoPn / Nigg).